The primary structure comprises 297 residues: Protein muscleblind (297 aa).

C3H1-type zinc fingers lie at residues 18–46 (WLQL…HPPA) and 52–80 (NGKV…HPPQ).

Belongs to the muscleblind family. Expressed in embryonic muscle cells.

The protein resides in the nucleus. Functionally, required for terminal differentiation of photoreceptor cells. Vital for embryonic development. In Drosophila melanogaster (Fruit fly), this protein is Protein muscleblind (mbl).